The sequence spans 37 residues: Lambda-hexatoxin-Hv1c (37 aa).

4 disulfide bridges follow: Cys-3–Cys-17, Cys-10–Cys-22, Cys-13–Cys-14, and Cys-16–Cys-32.

This sequence belongs to the neurotoxin 11 (kappa toxin) family. In terms of tissue distribution, expressed by the venom gland.

The protein localises to the secreted. Its function is as follows. This excitatory toxin inhibits insect calcium-activated potassium (KCa) channels (Slo-type). Pan-neuronal expression in Drosophila is lethal but flies engineered to express the toxin only in clock neurons have defects in circadian rhythm but a normal lifespan. The sequence is that of Lambda-hexatoxin-Hv1c from Hadronyche versuta (Blue mountains funnel-web spider).